The following is a 389-amino-acid chain: Chromobox protein homolog 8 (389 aa).

In terms of domain architecture, Chromo spans 11–69 (FAAEALLKRRIRKGRMEYLVKWKGWSQKYSTWEPEENILDARLLAAFEEREREMELYGP). A phosphoserine mark is found at Ser110 and Ser130. A disordered region spans residues 124-241 (LRNMGLSPPA…DDTPSGAGKF (118 aa)). Residues 145-189 (EAPRDRDRDRDRDRERDRERERERERERERERERERGTSRVDDKP) show a composition bias toward basic and acidic residues. Ser191, Ser256, Ser265, Ser311, Ser332, and Ser352 each carry phosphoserine. The segment at 298 to 327 (GALDPNGTRVRHGSGPPSSGGGLYRDMGAQ) is disordered.

In terms of assembly, component of a PRC1-like complex. Interacts with RING1 RNF2, PCGF1, PCGF2, PCGF3, BMI1, PCGF5 and PCGF6. Interacts with MLLT3 and histone H3. Interacts with PHC2.

Its subcellular location is the nucleus. Functionally, component of a Polycomb group (PcG) multiprotein PRC1-like complex, a complex class required to maintain the transcriptionally repressive state of many genes, including Hox genes, throughout development. PcG PRC1 complex acts via chromatin remodeling and modification of histones; it mediates monoubiquitination of histone H2A 'Lys-119', rendering chromatin heritably changed in its expressibility. The chain is Chromobox protein homolog 8 (CBX8) from Homo sapiens (Human).